Here is a 149-residue protein sequence, read N- to C-terminus: Large ribosomal subunit protein uL15 (149 aa).

Positions 1–58 are disordered; sequence MKLHNLRPAKGGEVKARKRVGRGYGSGLGHNAGRGRDGQNSRSGGGVRPGFEGGQMPL. Composition is skewed to gly residues over residues 22–32 and 43–53; these read RGYGSGLGHNA and SGGGVRPGFEG.

The protein belongs to the universal ribosomal protein uL15 family. In terms of assembly, part of the 50S ribosomal subunit.

Functionally, binds to the 23S rRNA. In Finegoldia magna (strain ATCC 29328 / DSM 20472 / WAL 2508) (Peptostreptococcus magnus), this protein is Large ribosomal subunit protein uL15.